Here is a 120-residue protein sequence, read N- to C-terminus: Secreted RxLR effector protein RXLR-C26 (120 aa).

Residues 1 to 29 (MTGILCFPPFARFFMLLSGCAWLAGVSSG) form the signal peptide. Positions 57-77 (RNLRGHINSAIIEANDTSEER) match the RxLR-dEER motif. The N-linked (GlcNAc...) asparagine glycan is linked to asparagine 71.

It belongs to the RxLR effector family.

It localises to the secreted. Its subcellular location is the host cytoplasm. The protein resides in the host nucleus. Secreted effector that does not suppress pattern-triggered immunity (PTI) in plant host. This Plasmopara halstedii (Downy mildew of sunflower) protein is Secreted RxLR effector protein RXLR-C26.